Here is a 471-residue protein sequence, read N- to C-terminus: Ribulose bisphosphate carboxylase large chain (471 aa).

Residues N119 and T169 each coordinate substrate. K171 acts as the Proton acceptor in catalysis. K173 serves as a coordination point for substrate. The Mg(2+) site is built by K197, D199, and E200. K197 bears the N6-carboxylysine mark. The active-site Proton acceptor is H290. Positions 291, 323, and 375 each coordinate substrate.

Belongs to the RuBisCO large chain family. Type I subfamily. In terms of assembly, heterohexadecamer of 8 large chains and 8 small chains; disulfide-linked. The disulfide link is formed within the large subunit homodimers. The cofactor is Mg(2+). The disulfide bond which can form in the large chain dimeric partners within the hexadecamer appears to be associated with oxidative stress and protein turnover.

It localises to the carboxysome. The catalysed reaction is 2 (2R)-3-phosphoglycerate + 2 H(+) = D-ribulose 1,5-bisphosphate + CO2 + H2O. The enzyme catalyses D-ribulose 1,5-bisphosphate + O2 = 2-phosphoglycolate + (2R)-3-phosphoglycerate + 2 H(+). Functionally, ruBisCO catalyzes two reactions: the carboxylation of D-ribulose 1,5-bisphosphate, the primary event in carbon dioxide fixation, as well as the oxidative fragmentation of the pentose substrate in the photorespiration process. Both reactions occur simultaneously and in competition at the same active site. The polypeptide is Ribulose bisphosphate carboxylase large chain (Microcystis aeruginosa (strain NIES-843 / IAM M-2473)).